The following is a 574-amino-acid chain: FAD-linked oxidoreductase penH (574 aa).

Positions 1–25 (MLPRALTLSALLALLLAIYLALAPA) are cleaved as a signal peptide. N-linked (GlcNAc...) asparagine glycosylation is found at asparagine 48, asparagine 107, asparagine 193, asparagine 368, and asparagine 385. The FAD-binding PCMH-type domain maps to 121 to 305 (HQGRIPLYAA…VRVTMRTYPD (185 aa)).

Belongs to the oxygen-dependent FAD-linked oxidoreductase family. It depends on FAD as a cofactor.

The enzyme catalyses peniprequinolone + A = yaequinolone E + AH2. It participates in secondary metabolite biosynthesis. It functions in the pathway alkaloid biosynthesis. The protein operates within mycotoxin biosynthesis. In terms of biological role, FAD-linked oxidoreductase; part of the gene cluster that mediates the biosynthesis of penigequinolones, potent insecticidal alkaloids that contain a highly modified 10-carbon prenyl group. The first stage is catalyzed by the nonribosomal peptide synthetase penN that condenses anthranilic acid and O-methyl-L-tyrosine to produce 4'-methoxycyclopeptin. 4'-methoxycyclopeptin is then converted to 4'-methoxydehydrocyclopeptin by the ketoglutarate-dependent dioxygenase penM through dehydrogenation to form a double bond between C-alpha and C-beta of the O-methyltyrosine side chain. PenM also converts its first product methoxydehydrocyclopeptin to 4'-methoxycyclopenin. The following conversion of 4'methoxycyclopenin into 4'-methoxyviridicatin is catalyzed by the cyclopenase penL. 4'-methoxyviridicatin is the precursor of quinolone natural products, and is further converted to quinolinone B. The prenyltransferase penI then catalyzes the canonical Friedel-Crafts alkylation of quinolinone B with dimethylallyl cation to yield dimethylallyl quinolone, which is subjected to FAD-dependent dehydrogenation by the FAD-linked oxidoreductase penH to yield conjugated aryl diene. The delta(3') double bond then serves as the site of the second alkylation with DMAPP catalyzed by the prenyltransferase penG to yield a carbenium ion intermediate, which can be attacked by H(2)O to yield a styrenyl quinolone containing a C3'-hydroxyprenyl chain, or undergo cyclization to yield yaequinolones J1 and J2. The conversion of the styrenyl quinolone into the tetrahydrofuran-containing yaequinolone C is performed by the FAD-dependent monooxygenase penE and involves epoxidation of the terminal C7'-C8' olefin, followed by epoxide ring opening initiated by the C3' hydroxyl group. The predicted cysteine hydrolase penJ acts as an epoxide hydrolase that enhances the rate of the 5-exo-tet cyclization step, increasing the yield of yaequinolone C. PenF catalyzes the cationic rearrangement of the epoxide formed by penE (before ring opening to produce yaequinolone C) into yaequinolone D. Finally, the short-chain dehydrogenase/reductase (SDR)-like reductase penD, catalyzes both the dehydration of yaequinolone D and the reduction of the resulting oxonium to yield penigequinolone. In Penicillium thymicola, this protein is FAD-linked oxidoreductase penH.